The primary structure comprises 167 residues: Peroxiredoxin Pen c 3 (167 aa).

The region spanning 3–167 (LKAGDSFPEG…SRADHVLKQL (165 aa)) is the Thioredoxin domain. The active-site Cysteine sulfenic acid (-SOH) intermediate is Cys60.

Belongs to the peroxiredoxin family. Prx5 subfamily. As to quaternary structure, homodimer; disulfide-linked, upon oxidation.

The enzyme catalyses a hydroperoxide + [thioredoxin]-dithiol = an alcohol + [thioredoxin]-disulfide + H2O. In terms of biological role, thiol-specific peroxidase that catalyzes the reduction of hydrogen peroxide and organic hydroperoxides to water and alcohols, respectively. Plays a role in cell protection against oxidative stress by detoxifying peroxides and as sensor of hydrogen peroxide-mediated signaling events. The polypeptide is Peroxiredoxin Pen c 3 (Penicillium citrinum).